We begin with the raw amino-acid sequence, 183 residues long: Triggering receptor expressed on myeloid cells 3 (183 aa).

The first 19 residues, 1–19, serve as a signal peptide directing secretion; the sequence is MSPLLLWLGLMLCVSGLQA. Residues 20-138 lie on the Extracellular side of the membrane; it reads GDEEEHKCFL…AWCQGKPVMV (119 aa). Residues 30–128 form the Ig-like V-type domain; that stretch reads EGENLTLTCP…VIILRQRIRL (99 aa). N33 is a glycosylation site (N-linked (GlcNAc...) asparagine). Cysteines 38 and 110 form a disulfide. A helical transmembrane segment spans residues 139–159; it reads IVLTCGFILNKGLVFSVLFVF. At 160–183 the chain is on the cytoplasmic side; it reads LCKAGPKVLQPSKTSKVQGVSEKQ.

In terms of assembly, interacts with TYROBP/DAP12. In terms of tissue distribution, expressed in macrophages and in T-cells.

The protein resides in the cell membrane. In terms of biological role, forms a receptor signaling complex with TYROBP/DAP12 which mediates activation of macrophages as part of the innate immune response. The protein is Triggering receptor expressed on myeloid cells 3 of Mus musculus (Mouse).